The primary structure comprises 123 residues: Secreted LysM effector Lys1 (123 aa).

The first 20 residues, 1 to 20 (MMGLAKTLLLASQLTAVVVA), serve as a signal peptide directing secretion. One can recognise a LysM domain in the interval 72-118 (KFCWVQAGNKCYQVAMENHISLADFLKWNPGAGSDCRTLWANTYACV).

It belongs to the secreted LysM effector family.

Functionally, might have a role in sequestration of chitin oligosaccharides (breakdown products of fungal cell walls that are released during invasion and act as triggers of host immunity) to dampen host defense. In Pochonia chlamydosporia (strain 123) (Metacordyceps chlamydosporia), this protein is Secreted LysM effector Lys1.